A 290-amino-acid chain; its full sequence is MFSGSIVALVTPMRNDSVDVHHLRELVEFHIAKGTHALVAAGTTGEAGTLSHSEKLLVIKTVIEQAKERVPVIAGTAMNATKDCIELTQQAMEYGAHAAFIMTPAYIKPTQEGLYLHYSHIAQSVAIPIILYNVPGRTACDMLPETVARLAKISNIIGIKEATGQMTRLQQILRLCEGSIDVYSGDDLTAAQWLLSGAKGVISVTANVAAKLMAKMCDLAMDDDQAGCLRIQEQLMPLHELLFVESNPIPVKWAMKKMGLIGGELRLPMTELSEKHHQALEKVLKNLELI.

A pyruvate-binding site is contributed by threonine 44. The active-site Proton donor/acceptor is the tyrosine 132. Lysine 160 functions as the Schiff-base intermediate with substrate in the catalytic mechanism. Isoleucine 202 serves as a coordination point for pyruvate.

The protein belongs to the DapA family. As to quaternary structure, homotetramer; dimer of dimers.

Its subcellular location is the cytoplasm. It carries out the reaction L-aspartate 4-semialdehyde + pyruvate = (2S,4S)-4-hydroxy-2,3,4,5-tetrahydrodipicolinate + H2O + H(+). It participates in amino-acid biosynthesis; L-lysine biosynthesis via DAP pathway; (S)-tetrahydrodipicolinate from L-aspartate: step 3/4. Its function is as follows. Catalyzes the condensation of (S)-aspartate-beta-semialdehyde [(S)-ASA] and pyruvate to 4-hydroxy-tetrahydrodipicolinate (HTPA). The chain is 4-hydroxy-tetrahydrodipicolinate synthase from Legionella pneumophila (strain Corby).